Here is an 802-residue protein sequence, read N- to C-terminus: Copper-exporting P-type ATPase (802 aa).

HMA domains lie at 5-70 and 72-138; these read KKTT…YGVA and ETVE…YDAS. Residues C16, C19, C83, and C86 each contribute to the Cu(+) site. The next 6 membrane-spanning stretches (helical) occupy residues 161–181, 192–212, 224–244, 256–276, 411–431, and 438–458; these read LIIS…HLFN, WFQF…FYVG, MDVL…YEMV, LYFE…YLEA, YFVP…ITLV, and PALV…LGLA. Catalysis depends on D495, which acts as the 4-aspartylphosphate intermediate. Positions 690 and 694 each coordinate Mg(2+). 2 helical membrane passes run 748–767 and 771–790; these read LFWA…LGLL and VAGA…ALRL.

The protein belongs to the cation transport ATPase (P-type) (TC 3.A.3) family. Type IB subfamily.

The protein localises to the cell membrane. It catalyses the reaction Cu(+)(in) + ATP + H2O = Cu(+)(out) + ADP + phosphate + H(+). Its function is as follows. Involved in copper export. The protein is Copper-exporting P-type ATPase (copA) of Staphylococcus aureus (strain USA300 / TCH1516).